The following is a 223-amino-acid chain: Deoxyribose-phosphate aldolase (223 aa).

The Proton donor/acceptor role is filled by D89. The active-site Schiff-base intermediate with acetaldehyde is the K152. The active-site Proton donor/acceptor is K181.

The protein belongs to the DeoC/FbaB aldolase family. DeoC type 1 subfamily.

Its subcellular location is the cytoplasm. The catalysed reaction is 2-deoxy-D-ribose 5-phosphate = D-glyceraldehyde 3-phosphate + acetaldehyde. It participates in carbohydrate degradation; 2-deoxy-D-ribose 1-phosphate degradation; D-glyceraldehyde 3-phosphate and acetaldehyde from 2-deoxy-alpha-D-ribose 1-phosphate: step 2/2. Catalyzes a reversible aldol reaction between acetaldehyde and D-glyceraldehyde 3-phosphate to generate 2-deoxy-D-ribose 5-phosphate. This is Deoxyribose-phosphate aldolase from Listeria welshimeri serovar 6b (strain ATCC 35897 / DSM 20650 / CCUG 15529 / CIP 8149 / NCTC 11857 / SLCC 5334 / V8).